A 503-amino-acid polypeptide reads, in one-letter code: Anaerobic nitric oxide reductase flavorubredoxin (503 aa).

The interval 30–210 (LQGSSYNSYL…PFSRLVTAKI (181 aa)) is zinc metallo-hydrolase. Fe cation-binding residues include His-79, Glu-81, Asp-83, His-147, Asp-166, and His-227. The 140-residue stretch at 254–393 (ITLFYDTMSN…ICREHGREIA (140 aa)) folds into the Flavodoxin-like domain. FMN is bound by residues 260–264 (TMSNN) and 342–369 (AFGS…ETTL). The region spanning 451–502 (NGCMQCSVCQWIYDPALGEPMQDVTPGTMWSDVPDSFLCPECGLGKDVFNPI) is the Rubredoxin-like domain. Positions 456, 459, 489, and 492 each coordinate Fe cation.

It in the N-terminal section; belongs to the zinc metallo-hydrolase group 3 family. In terms of assembly, homotetramer. It depends on Fe cation as a cofactor. FMN serves as cofactor.

Its subcellular location is the cytoplasm. It participates in nitrogen metabolism; nitric oxide reduction. Its function is as follows. Anaerobic nitric oxide reductase; uses NADH to detoxify nitric oxide (NO), protecting several 4Fe-4S NO-sensitive enzymes. Has at least 2 reductase partners, only one of which (NorW, flavorubredoxin reductase) has been identified. NO probably binds to the di-iron center; electrons enter from the NorW at rubredoxin and are transferred sequentially to the FMN center and the di-iron center. Also able to function as an aerobic oxygen reductase. The sequence is that of Anaerobic nitric oxide reductase flavorubredoxin from Pectobacterium carotovorum subsp. carotovorum (strain PC1).